Consider the following 322-residue polypeptide: Epoxide hydrolase A (322 aa).

The 105-residue stretch at P27–L131 folds into the AB hydrolase-1 domain. D103 serves as the catalytic Nucleophile. Residue H298 is the Proton acceptor of the active site.

Belongs to the AB hydrolase superfamily. Epoxide hydrolase family. In terms of assembly, homodimer.

The catalysed reaction is an epoxide + H2O = an ethanediol. Functionally, could be involved in detoxification of extraneous host-cell epoxides. Catalyzes the hydrolysis of epoxide-containing substrates. This is Epoxide hydrolase A (ephA) from Mycobacterium tuberculosis (strain ATCC 25618 / H37Rv).